Reading from the N-terminus, the 92-residue chain is Small ribosomal subunit protein bS18B (92 aa).

It belongs to the bacterial ribosomal protein bS18 family. As to quaternary structure, part of the 30S ribosomal subunit. Forms a tight heterodimer with protein bS6.

Functionally, binds as a heterodimer with protein bS6 to the central domain of the 16S rRNA, where it helps stabilize the platform of the 30S subunit. The polypeptide is Small ribosomal subunit protein bS18B (Cupriavidus pinatubonensis (strain JMP 134 / LMG 1197) (Cupriavidus necator (strain JMP 134))).